We begin with the raw amino-acid sequence, 282 residues long: Homeobox protein vex1 (282 aa).

The segment at residues 129–188 (ASRARTKFTAEQLEELEKSFKENRYIGSSEKRRLSKVLKLSENQIKTWFQNRRMKFKRQT) is a DNA-binding region (homeobox).

The protein resides in the nucleus. Transcriptional repressor. Acts in a ventral signaling pathway downstream of bmp4 to antagonize the Spemann organizer and ventrally pattern the embryonic mesoderm. Represses transcription of the dorsal genes gsc and otx2. This Xenopus tropicalis (Western clawed frog) protein is Homeobox protein vex1.